The following is a 542-amino-acid chain: CTP synthase (542 aa).

Positions 1-265 are amidoligase domain; the sequence is MARYVFITGG…DSEILSAFGI (265 aa). Ser13 provides a ligand contact to CTP. Ser13 serves as a coordination point for UTP. 14–19 contributes to the ATP binding site; it reads SLGKGI. L-glutamine is bound at residue Tyr54. An ATP-binding site is contributed by Asp71. Residues Asp71 and Glu139 each coordinate Mg(2+). Residues 146–148, 186–191, and Lys222 each bind CTP; these read DIE and KTKPTQ. UTP contacts are provided by residues 186–191 and Lys222; that span reads KTKPTQ. Residues 291–541 enclose the Glutamine amidotransferase type-1 domain; sequence TIAIVGKYTG…IAATVEQSRL (251 aa). Ala353 is a binding site for L-glutamine. Cys380 acts as the Nucleophile; for glutamine hydrolysis in catalysis. L-glutamine is bound by residues 381-384, Glu404, and Arg469; that span reads FGMQ. Catalysis depends on residues His514 and Glu516.

This sequence belongs to the CTP synthase family. In terms of assembly, homotetramer.

The enzyme catalyses UTP + L-glutamine + ATP + H2O = CTP + L-glutamate + ADP + phosphate + 2 H(+). It carries out the reaction L-glutamine + H2O = L-glutamate + NH4(+). The catalysed reaction is UTP + NH4(+) + ATP = CTP + ADP + phosphate + 2 H(+). It participates in pyrimidine metabolism; CTP biosynthesis via de novo pathway; CTP from UDP: step 2/2. With respect to regulation, allosterically activated by GTP, when glutamine is the substrate; GTP has no effect on the reaction when ammonia is the substrate. The allosteric effector GTP functions by stabilizing the protein conformation that binds the tetrahedral intermediate(s) formed during glutamine hydrolysis. Inhibited by the product CTP, via allosteric rather than competitive inhibition. Catalyzes the ATP-dependent amination of UTP to CTP with either L-glutamine or ammonia as the source of nitrogen. Regulates intracellular CTP levels through interactions with the four ribonucleotide triphosphates. The sequence is that of CTP synthase from Bartonella bacilliformis (strain ATCC 35685 / KC583 / Herrer 020/F12,63).